We begin with the raw amino-acid sequence, 557 residues long: Ribonuclease J 2 (557 aa).

Zn(2+) contacts are provided by His76, His78, His144, and Glu166. 366 to 370 (HASSH) serves as a coordination point for substrate.

The protein belongs to the metallo-beta-lactamase superfamily. RNA-metabolizing metallo-beta-lactamase-like family. Bacterial RNase J subfamily. Homodimer. Component of a possible RNA degradosome complex composed of cshA, eno, pfkA, pnp, rnjA, rnjB, rnpA and rny. Interacts specifically with RNase J1. Zn(2+) serves as cofactor.

Its subcellular location is the cytoplasm. An RNase that has 5'-3' exonuclease and endonuclease activity, with the exonuclease activity probably being most important in vivo. Involved in maturation of 16S rRNA, rnpB (the RNA component of RNase P) maturation and degradation, and mRNA maturation and/or decay. This subunit probably plays a structural rather than enzymatic role as mutation of its putative active site gives no phenotype, and its deletion is partially complemented by inactive RNase J1. The protein is Ribonuclease J 2 of Staphylococcus aureus (strain NCTC 8325 / PS 47).